The following is a 576-amino-acid chain: Sulfite reductase [NADPH] hemoprotein beta-component (576 aa).

Residues C435, C441, C480, and C484 each coordinate [4Fe-4S] cluster. Position 484 (C484) interacts with siroheme.

The protein belongs to the nitrite and sulfite reductase 4Fe-4S domain family. As to quaternary structure, alpha(8)-beta(8). The alpha component is a flavoprotein, the beta component is a hemoprotein. The cofactor is siroheme. Requires [4Fe-4S] cluster as cofactor.

The catalysed reaction is hydrogen sulfide + 3 NADP(+) + 3 H2O = sulfite + 3 NADPH + 4 H(+). The protein operates within sulfur metabolism; hydrogen sulfide biosynthesis; hydrogen sulfide from sulfite (NADPH route): step 1/1. In terms of biological role, component of the sulfite reductase complex that catalyzes the 6-electron reduction of sulfite to sulfide. This is one of several activities required for the biosynthesis of L-cysteine from sulfate. This chain is Sulfite reductase [NADPH] hemoprotein beta-component, found in Yersinia pseudotuberculosis serotype IB (strain PB1/+).